An 89-amino-acid polypeptide reads, in one-letter code: Small ribosomal subunit protein uS15 (89 aa).

This sequence belongs to the universal ribosomal protein uS15 family. Part of the 30S ribosomal subunit. Forms a bridge to the 50S subunit in the 70S ribosome, contacting the 23S rRNA.

In terms of biological role, one of the primary rRNA binding proteins, it binds directly to 16S rRNA where it helps nucleate assembly of the platform of the 30S subunit by binding and bridging several RNA helices of the 16S rRNA. Forms an intersubunit bridge (bridge B4) with the 23S rRNA of the 50S subunit in the ribosome. This chain is Small ribosomal subunit protein uS15, found in Azoarcus sp. (strain BH72).